A 502-amino-acid polypeptide reads, in one-letter code: Probable malate:quinone oxidoreductase (502 aa).

It belongs to the MQO family. FAD is required as a cofactor.

It catalyses the reaction (S)-malate + a quinone = a quinol + oxaloacetate. It participates in carbohydrate metabolism; tricarboxylic acid cycle; oxaloacetate from (S)-malate (quinone route): step 1/1. This chain is Probable malate:quinone oxidoreductase, found in Parasynechococcus marenigrum (strain WH8102).